We begin with the raw amino-acid sequence, 190 residues long: RNA pyrophosphohydrolase (190 aa).

In terms of domain architecture, Nudix hydrolase spans 6–149 (GYRPNVGIVL…KRGVYARALC (144 aa)). The short motif at 38 to 59 (GGMHSDETPVEAMYRELNEEIG) is the Nudix box element.

It belongs to the Nudix hydrolase family. RppH subfamily. A divalent metal cation is required as a cofactor.

Accelerates the degradation of transcripts by removing pyrophosphate from the 5'-end of triphosphorylated RNA, leading to a more labile monophosphorylated state that can stimulate subsequent ribonuclease cleavage. In Xylella fastidiosa (strain M12), this protein is RNA pyrophosphohydrolase.